A 1368-amino-acid polypeptide reads, in one-letter code: DNA-directed RNA polymerase subunit beta (1368 aa).

The protein belongs to the RNA polymerase beta chain family. The RNAP catalytic core consists of 2 alpha, 1 beta, 1 beta' and 1 omega subunit. When a sigma factor is associated with the core the holoenzyme is formed, which can initiate transcription.

It carries out the reaction RNA(n) + a ribonucleoside 5'-triphosphate = RNA(n+1) + diphosphate. DNA-dependent RNA polymerase catalyzes the transcription of DNA into RNA using the four ribonucleoside triphosphates as substrates. This chain is DNA-directed RNA polymerase subunit beta, found in Legionella pneumophila (strain Lens).